Reading from the N-terminus, the 142-residue chain is 3-hydroxyacyl-[acyl-carrier-protein] dehydratase FabZ (142 aa).

His-48 is an active-site residue.

It belongs to the thioester dehydratase family. FabZ subfamily.

It is found in the cytoplasm. It catalyses the reaction a (3R)-hydroxyacyl-[ACP] = a (2E)-enoyl-[ACP] + H2O. Functionally, involved in unsaturated fatty acids biosynthesis. Catalyzes the dehydration of short chain beta-hydroxyacyl-ACPs and long chain saturated and unsaturated beta-hydroxyacyl-ACPs. The protein is 3-hydroxyacyl-[acyl-carrier-protein] dehydratase FabZ of Natranaerobius thermophilus (strain ATCC BAA-1301 / DSM 18059 / JW/NM-WN-LF).